The following is a 379-amino-acid chain: uncharacterized protein (379 aa).

The chain crosses the membrane as a helical span at residues 9–26; the sequence is YFQLITTIFLISSITIAA.

This sequence to A.liquefaciens L-sorbosone dehydrogenase.

Its subcellular location is the membrane. This is an uncharacterized protein from Borreliella burgdorferi (strain ATCC 35210 / DSM 4680 / CIP 102532 / B31) (Borrelia burgdorferi).